Reading from the N-terminus, the 154-residue chain is Crossover junction endodeoxyribonuclease RuvC (154 aa).

Residues D7, E67, and D139 contribute to the active site. D7, E67, and D139 together coordinate Mg(2+).

This sequence belongs to the RuvC family. Homodimer which binds Holliday junction (HJ) DNA. The HJ becomes 2-fold symmetrical on binding to RuvC with unstacked arms; it has a different conformation from HJ DNA in complex with RuvA. In the full resolvosome a probable DNA-RuvA(4)-RuvB(12)-RuvC(2) complex forms which resolves the HJ. Mg(2+) serves as cofactor.

The protein resides in the cytoplasm. It carries out the reaction Endonucleolytic cleavage at a junction such as a reciprocal single-stranded crossover between two homologous DNA duplexes (Holliday junction).. The RuvA-RuvB-RuvC complex processes Holliday junction (HJ) DNA during genetic recombination and DNA repair. Endonuclease that resolves HJ intermediates. Cleaves cruciform DNA by making single-stranded nicks across the HJ at symmetrical positions within the homologous arms, yielding a 5'-phosphate and a 3'-hydroxyl group; requires a central core of homology in the junction. The consensus cleavage sequence is 5'-(A/T)TT(C/G)-3'. Cleavage occurs on the 3'-side of the TT dinucleotide at the point of strand exchange. HJ branch migration catalyzed by RuvA-RuvB allows RuvC to scan DNA until it finds its consensus sequence, where it cleaves and resolves the cruciform DNA. The sequence is that of Crossover junction endodeoxyribonuclease RuvC from Synechococcus sp. (strain WH7803).